We begin with the raw amino-acid sequence, 212 residues long: Lipopolysaccharide core heptose(II)-phosphate phosphatase (212 aa).

The first 32 residues, 1 to 32 (MSIGGVYELAFCRSSLKSKKYFIILLALAAIA), serve as a signal peptide directing secretion.

It belongs to the phosphoglycerate mutase family. Ais subfamily.

It localises to the periplasm. The protein operates within bacterial outer membrane biogenesis; lipopolysaccharide metabolism. Its function is as follows. Catalyzes the dephosphorylation of heptose(II) of the outer membrane lipopolysaccharide core. This Shigella boydii serotype 4 (strain Sb227) protein is Lipopolysaccharide core heptose(II)-phosphate phosphatase.